The chain runs to 1172 residues: DNA-directed RNA polymerases IV and V subunit 2 (1172 aa).

Asp786 serves as a coordination point for Mg(2+). The Zn(2+) site is built by Cys1108, Cys1111, Cys1133, and Cys1136. Residues 1108-1136 form a C4-type zinc finger; the sequence is CRKCKTYANVIERTPSSGRKIRGPYCRVC.

The protein belongs to the RNA polymerase beta chain family. Component of the RNA polymerase IV and V complexes. Interacts with SSH1, NRPD1 and NRPE1. Mostly expressed in seedlings, flowers and roots, present ubiquitously, except in sperm cells.

The protein localises to the nucleus. It carries out the reaction RNA(n) + a ribonucleoside 5'-triphosphate = RNA(n+1) + diphosphate. DNA-dependent RNA polymerase catalyzes the transcription of DNA into RNA using the four ribonucleoside triphosphates as substrates. Second largest component of RNA polymerases IV and V which mediate short-interfering RNAs (siRNA) accumulation and subsequent RNA-directed DNA methylation-dependent (RdDM) transcriptional gene silencing (TGS) of endogenous repeated sequences, including transposable elements. Proposed to contribute to the polymerase catalytic activity and forms the polymerase active center together with the largest subunit. Also required for full erasure of methylation when the RNA trigger is withdrawn. Required for intercellular RNA interference (RNAi) leading to systemic post-transcriptional gene silencing. Involved in the maintenance of post-transcriptional RNA silencing. During interphase, mediates siRNA-independent heterochromatin association and methylation into chromocenters and condensation and cytosine methylation at pericentromeric major repeats. Required for complete maintenance of the 35S promoter homology-dependent TGS in transgenic plants and for the initial establishment of DNA methylation. This is DNA-directed RNA polymerases IV and V subunit 2 (NRPD2) from Arabidopsis thaliana (Mouse-ear cress).